Here is a 101-residue protein sequence, read N- to C-terminus: Urease subunit beta (101 aa).

Belongs to the urease beta subunit family. Heterotrimer of UreA (gamma), UreB (beta) and UreC (alpha) subunits. Three heterotrimers associate to form the active enzyme.

It localises to the cytoplasm. It catalyses the reaction urea + 2 H2O + H(+) = hydrogencarbonate + 2 NH4(+). It functions in the pathway nitrogen metabolism; urea degradation; CO(2) and NH(3) from urea (urease route): step 1/1. The protein is Urease subunit beta of Psychromonas ingrahamii (strain DSM 17664 / CCUG 51855 / 37).